A 274-amino-acid chain; its full sequence is Large ribosomal subunit protein uL2 (274 aa).

Disordered regions lie at residues Q37 to H60 and A224 to L252. Over residues T50 to H60 the composition is skewed to basic residues. A compositionally biased stretch (basic and acidic residues) spans D229–V246.

The protein belongs to the universal ribosomal protein uL2 family. Part of the 50S ribosomal subunit. Forms a bridge to the 30S subunit in the 70S ribosome.

One of the primary rRNA binding proteins. Required for association of the 30S and 50S subunits to form the 70S ribosome, for tRNA binding and peptide bond formation. It has been suggested to have peptidyltransferase activity; this is somewhat controversial. Makes several contacts with the 16S rRNA in the 70S ribosome. The chain is Large ribosomal subunit protein uL2 from Paracidovorax citrulli (strain AAC00-1) (Acidovorax citrulli).